We begin with the raw amino-acid sequence, 673 residues long: DNA ligase (673 aa).

Residues 33-37 (DYEYD), 82-83 (SL), and Glu113 contribute to the NAD(+) site. The active-site N6-AMP-lysine intermediate is the Lys115. Arg136, Glu170, Lys285, and Lys309 together coordinate NAD(+). Zn(2+)-binding residues include Cys403, Cys406, Cys421, and Cys426. A BRCT domain is found at 583 to 672 (AKSDILKGYT…SHEEVEKILM (90 aa)).

Belongs to the NAD-dependent DNA ligase family. LigA subfamily. It depends on Mg(2+) as a cofactor. Mn(2+) is required as a cofactor.

It carries out the reaction NAD(+) + (deoxyribonucleotide)n-3'-hydroxyl + 5'-phospho-(deoxyribonucleotide)m = (deoxyribonucleotide)n+m + AMP + beta-nicotinamide D-nucleotide.. Functionally, DNA ligase that catalyzes the formation of phosphodiester linkages between 5'-phosphoryl and 3'-hydroxyl groups in double-stranded DNA using NAD as a coenzyme and as the energy source for the reaction. It is essential for DNA replication and repair of damaged DNA. The chain is DNA ligase from Caldicellulosiruptor saccharolyticus (strain ATCC 43494 / DSM 8903 / Tp8T 6331).